Reading from the N-terminus, the 329-residue chain is Probable nicotianamine synthase 7 (329 aa).

The protein belongs to the nicotianamine synthase (NAS)-like family.

The catalysed reaction is 3 S-adenosyl-L-methionine = nicotianamine + 3 S-methyl-5'-thioadenosine + 3 H(+). Synthesizes nicotianamine, a polyamine that is the first intermediate in the synthesis of the phytosiderophores of the mugineic acid type found in gramineae which serves as a sensor for the physiological iron status within the plant, and/or might be involved in the transport of iron. In Hordeum vulgare (Barley), this protein is Probable nicotianamine synthase 7 (NAS7).